We begin with the raw amino-acid sequence, 147 residues long: Sec-independent protein translocase protein TatB (147 aa).

Residues 2–22 form a helical membrane-spanning segment; that stretch reads FDGIGFMELLLIGVLGLVVLG. Polar residues predominate over residues 85 to 97; it reads QLKQAAQSVNRPY. Residues 85-147 are disordered; that stretch reads QLKQAAQSVN…DTRSNPKANG (63 aa). The span at 113–133 shows a compositional bias: low complexity; it reads ASQSVSTEASPSASSAPTSES.

The protein belongs to the TatB family. The Tat system comprises two distinct complexes: a TatABC complex, containing multiple copies of TatA, TatB and TatC subunits, and a separate TatA complex, containing only TatA subunits. Substrates initially bind to the TatABC complex, which probably triggers association of the separate TatA complex to form the active translocon.

The protein resides in the cell inner membrane. Its function is as follows. Part of the twin-arginine translocation (Tat) system that transports large folded proteins containing a characteristic twin-arginine motif in their signal peptide across membranes. Together with TatC, TatB is part of a receptor directly interacting with Tat signal peptides. TatB may form an oligomeric binding site that transiently accommodates folded Tat precursor proteins before their translocation. The polypeptide is Sec-independent protein translocase protein TatB (Shewanella sp. (strain ANA-3)).